We begin with the raw amino-acid sequence, 453 residues long: Phenylalanine-4-hydroxylase (453 aa).

A2 carries the post-translational modification N-acetylalanine. S16 carries the post-translational modification Phosphoserine. The ACT domain occupies 36–114 (SLIFSLKEEV…TVHELSRDKE (79 aa)). The Fe cation site is built by H285, H290, and E330.

It belongs to the biopterin-dependent aromatic amino acid hydroxylase family. Homodimer and homotetramer. Requires Fe(2+) as cofactor. Post-translationally, phosphorylation at Ser-16 increases basal activity and facilitates activation by the substrate phenylalanine.

The enzyme catalyses (6R)-L-erythro-5,6,7,8-tetrahydrobiopterin + L-phenylalanine + O2 = (4aS,6R)-4a-hydroxy-L-erythro-5,6,7,8-tetrahydrobiopterin + L-tyrosine. It functions in the pathway amino-acid degradation; L-phenylalanine degradation; acetoacetate and fumarate from L-phenylalanine: step 1/6. With respect to regulation, N-terminal region of PAH is thought to contain allosteric binding sites for phenylalanine and to constitute an 'inhibitory' domain that regulates the activity of a catalytic domain in the C-terminal portion of the molecule. Its function is as follows. Catalyzes the hydroxylation of L-phenylalanine to L-tyrosine. The protein is Phenylalanine-4-hydroxylase (Pah) of Mus musculus (Mouse).